Consider the following 440-residue polypeptide: 23S rRNA (uracil(1939)-C(5))-methyltransferase RlmD (440 aa).

Residues 8-69 (PQKINKLQRE…RQFGLATTKK (62 aa)) form the TRAM domain. [4Fe-4S] cluster-binding residues include cysteine 82, cysteine 88, cysteine 91, and cysteine 169. Glutamine 272, phenylalanine 301, asparagine 306, glutamate 322, aspartate 349, and aspartate 370 together coordinate S-adenosyl-L-methionine. Catalysis depends on cysteine 396, which acts as the Nucleophile.

The protein belongs to the class I-like SAM-binding methyltransferase superfamily. RNA M5U methyltransferase family. RlmD subfamily.

It carries out the reaction uridine(1939) in 23S rRNA + S-adenosyl-L-methionine = 5-methyluridine(1939) in 23S rRNA + S-adenosyl-L-homocysteine + H(+). Catalyzes the formation of 5-methyl-uridine at position 1939 (m5U1939) in 23S rRNA. The polypeptide is 23S rRNA (uracil(1939)-C(5))-methyltransferase RlmD (Mannheimia succiniciproducens (strain KCTC 0769BP / MBEL55E)).